The sequence spans 101 residues: Guanyl-specific ribonuclease Po1 (101 aa).

Pyrrolidone carboxylic acid is present on Q1. Cystine bridges form between C7–C84, C9–C99, and C48–C82. The active site involves H36. The Proton acceptor role is filled by E54. H87 functions as the Proton donor in the catalytic mechanism.

The protein belongs to the ribonuclease N1/T1 family.

The enzyme catalyses [RNA] containing guanosine + H2O = an [RNA fragment]-3'-guanosine-3'-phosphate + a 5'-hydroxy-ribonucleotide-3'-[RNA fragment].. Inhibited by divalent cations. Inhibition decreases in the order zinc, lead, cadmium, nickel, mercury. The protein is Guanyl-specific ribonuclease Po1 of Pleurotus ostreatus (Oyster mushroom).